A 254-amino-acid chain; its full sequence is MKFEAIAVEKIPLIHEGDNLPSIICEKIGLQDRDIMIIASTIVAKAEGEIFRLEDITPGEEALEIAARTGKDPRFIQAVLSKSREVFVETPFMLVTTLAGHTCVNAGIDESNIENGFLLYPPENPDASALKIGKELEKLSGKKLSIIITDTNGRAFKIGQTGVAIGIYNIKPVKRWIGEKDLFGKVLEITEQAIADELAGAANLLMGEGAGGIPVVIIRGLDYYCEGDTSIKESYRPENMDVIKQGLRCLRNKK.

GTP-binding positions include 11 to 14 (IPLI), 40 to 41 (ST), and Lys-45. An a divalent metal cation-binding site is contributed by Asp-109. Asn-112 provides a ligand contact to GTP. 3 residues coordinate a divalent metal cation: Asp-150, Thr-151, and Glu-208. 206 to 213 (MGEGAGGI) contributes to the GTP binding site.

This sequence belongs to the CofE family. In terms of assembly, homodimer. It depends on Mg(2+) as a cofactor. Mn(2+) is required as a cofactor. Requires K(+) as cofactor.

It catalyses the reaction oxidized coenzyme F420-0 + GTP + L-glutamate = oxidized coenzyme F420-1 + GDP + phosphate + H(+). It carries out the reaction oxidized coenzyme F420-1 + GTP + L-glutamate = oxidized coenzyme F420-2 + GDP + phosphate + H(+). The protein operates within cofactor biosynthesis; coenzyme F420 biosynthesis. Its function is as follows. Catalyzes the GTP-dependent successive addition of two or more gamma-linked L-glutamates to the L-lactyl phosphodiester of 7,8-didemethyl-8-hydroxy-5-deazariboflavin (F420-0) to form coenzyme F420-0-glutamyl-glutamate (F420-2) or polyglutamated F420 derivatives. The protein is Coenzyme F420:L-glutamate ligase of Methanosarcina mazei (strain ATCC BAA-159 / DSM 3647 / Goe1 / Go1 / JCM 11833 / OCM 88) (Methanosarcina frisia).